A 229-amino-acid chain; its full sequence is Somatolactin (229 aa).

The first 21 residues, 1 to 21 (MAALQEVLLAVLLWPVLVTIS), serve as a signal peptide directing secretion. 3 disulfides stabilise this stretch: cysteine 26/cysteine 36, cysteine 87/cysteine 203, and cysteine 220/cysteine 228. Asparagine 143 carries an N-linked (GlcNAc...) asparagine glycan.

It belongs to the somatotropin/prolactin family. As to expression, pituitary gland.

Its subcellular location is the secreted. The protein is Somatolactin of Tetraodon miurus (Congo puffer).